We begin with the raw amino-acid sequence, 90 residues long: Small ribosomal subunit protein bS18 (90 aa).

The protein belongs to the bacterial ribosomal protein bS18 family. In terms of assembly, part of the 30S ribosomal subunit. Forms a tight heterodimer with protein bS6.

In terms of biological role, binds as a heterodimer with protein bS6 to the central domain of the 16S rRNA, where it helps stabilize the platform of the 30S subunit. This is Small ribosomal subunit protein bS18 from Bordetella petrii (strain ATCC BAA-461 / DSM 12804 / CCUG 43448).